The primary structure comprises 222 residues: Alpha-S2-casein (222 aa).

The signal sequence occupies residues 1 to 15 (MKFFIFTCLLAVALA). Residues S23, S24, S25, S28, S46, S71, S72, S73, S76, S144, S146, S150, and S158 each carry the phosphoserine modification. The stretch at residues 76–140 (SAEVATEEVK…AVPITPTLNR (65 aa)) is a repeat. The stretch at residues 158 to 222 (STEVFTKKTK…TKVIPYVRYL (65 aa)) is a repeat.

The protein belongs to the alpha-casein family. In terms of tissue distribution, mammary gland specific. Secreted in milk.

The protein resides in the secreted. In terms of biological role, important role in the capacity of milk to transport calcium phosphate. Its function is as follows. Casocidin-I inhibits the growth of E.coli and S.carnosus. This is Alpha-S2-casein (CSN1S2) from Bos taurus (Bovine).